A 308-amino-acid polypeptide reads, in one-letter code: Glutaminase (308 aa).

Residues S66, N117, E161, N168, Y192, Y244, and V262 each contribute to the substrate site.

This sequence belongs to the glutaminase family. In terms of assembly, homotetramer.

It carries out the reaction L-glutamine + H2O = L-glutamate + NH4(+). This is Glutaminase from Shigella dysenteriae serotype 1 (strain Sd197).